Here is a 235-residue protein sequence, read N- to C-terminus: Probable transcriptional regulatory protein Cla_1081 (235 aa).

The protein belongs to the TACO1 family.

The protein resides in the cytoplasm. The polypeptide is Probable transcriptional regulatory protein Cla_1081 (Campylobacter lari (strain RM2100 / D67 / ATCC BAA-1060)).